The sequence spans 387 residues: UDP-N-acetylglucosamine--N-acetylmuramyl-(pentapeptide) pyrophosphoryl-undecaprenol N-acetylglucosamine transferase (387 aa).

Residues 14 to 16 (TGG), Asn-124, Arg-167, Ser-195, and Gln-296 each bind UDP-N-acetyl-alpha-D-glucosamine. The disordered stretch occupies residues 366–387 (LPQQNSIEEDSTFEKNQEGAVA). A compositionally biased stretch (basic and acidic residues) spans 377–387 (TFEKNQEGAVA).

Belongs to the glycosyltransferase 28 family. MurG subfamily.

The protein localises to the cell inner membrane. It catalyses the reaction di-trans,octa-cis-undecaprenyl diphospho-N-acetyl-alpha-D-muramoyl-L-alanyl-D-glutamyl-meso-2,6-diaminopimeloyl-D-alanyl-D-alanine + UDP-N-acetyl-alpha-D-glucosamine = di-trans,octa-cis-undecaprenyl diphospho-[N-acetyl-alpha-D-glucosaminyl-(1-&gt;4)]-N-acetyl-alpha-D-muramoyl-L-alanyl-D-glutamyl-meso-2,6-diaminopimeloyl-D-alanyl-D-alanine + UDP + H(+). It functions in the pathway cell wall biogenesis; peptidoglycan biosynthesis. Functionally, cell wall formation. Catalyzes the transfer of a GlcNAc subunit on undecaprenyl-pyrophosphoryl-MurNAc-pentapeptide (lipid intermediate I) to form undecaprenyl-pyrophosphoryl-MurNAc-(pentapeptide)GlcNAc (lipid intermediate II). The protein is UDP-N-acetylglucosamine--N-acetylmuramyl-(pentapeptide) pyrophosphoryl-undecaprenol N-acetylglucosamine transferase of Zymomonas mobilis subsp. mobilis (strain ATCC 31821 / ZM4 / CP4).